A 254-amino-acid polypeptide reads, in one-letter code: Nickel import ATP-binding protein NikD (254 aa).

In terms of domain architecture, ABC transporter spans 2–241 (PQQIELRNIA…PKHTVTRSLV (240 aa)). 36-43 (GGSGSGKS) serves as a coordination point for ATP.

This sequence belongs to the ABC transporter superfamily. Nickel importer (TC 3.A.1.5.3) family. As to quaternary structure, the complex is composed of two ATP-binding proteins (NikD and NikE), two transmembrane proteins (NikB and NikC) and a solute-binding protein (NikA).

It localises to the cell inner membrane. The catalysed reaction is Ni(2+)(out) + ATP + H2O = Ni(2+)(in) + ADP + phosphate + H(+). In terms of biological role, part of the ABC transporter complex NikABCDE involved in nickel import. Responsible for energy coupling to the transport system. This chain is Nickel import ATP-binding protein NikD, found in Shigella flexneri serotype 5b (strain 8401).